The sequence spans 433 residues: Succinate--CoA ligase [ADP-forming] subunit beta, mitochondrial (433 aa).

A mitochondrion-targeting transit peptide spans 1-23; sequence MLTRSVLRKAPRAFSPFLQKRNL. The ATP-grasp domain maps to 31–273; sequence HDILRKFGVD…ISQEDPDEAR (243 aa). ATP-binding positions include K68, 75–77, and E136; that span reads GRG. Residues N228 and D242 each contribute to the Mg(2+) site. Residues N293 and 350–352 each bind substrate; that span reads GIV.

It belongs to the succinate/malate CoA ligase beta subunit family. In terms of assembly, heterodimer of an alpha and a beta subunit. The cofactor is Mg(2+).

The protein resides in the mitochondrion. The catalysed reaction is succinate + ATP + CoA = succinyl-CoA + ADP + phosphate. Its pathway is carbohydrate metabolism; tricarboxylic acid cycle; succinate from succinyl-CoA (ligase route): step 1/1. Functionally, succinyl-CoA synthetase functions in the citric acid cycle (TCA), coupling the hydrolysis of succinyl-CoA to the synthesis of ATP and thus represents the only step of substrate-level phosphorylation in the TCA. The beta subunit provides nucleotide specificity of the enzyme and binds the substrate succinate, while the binding sites for coenzyme A and phosphate are found in the alpha subunit. This is Succinate--CoA ligase [ADP-forming] subunit beta, mitochondrial from Schizosaccharomyces pombe (strain 972 / ATCC 24843) (Fission yeast).